A 434-amino-acid chain; its full sequence is Cytochrome b-c1 complex subunit 2, mitochondrial (434 aa).

The N-terminal 31 residues, 1–31, are a transit peptide targeting the mitochondrion; the sequence is MYSLNRLPRSAAFKSSANLLRRNASTTSAGG.

This sequence belongs to the peptidase M16 family. UQCRC2/QCR2 subfamily. In terms of assembly, component of the ubiquinol-cytochrome c oxidoreductase (cytochrome b-c1 complex, complex III, CIII), a multisubunit enzyme composed of 10 subunits. The complex is composed of 3 respiratory subunits cytochrome b (COB), cytochrome c1 (CYT1) and Rieske protein (RIP1), 2 core protein subunits COR1 and QCR2, and 5 low-molecular weight protein subunits QCR6, QCR7, QCR8, QCR9 and QCR10. The complex exists as an obligatory dimer and forms supercomplexes (SCs) in the inner mitochondrial membrane with a monomer or a dimer of cytochrome c oxidase (complex IV, CIV), resulting in 2 different assemblies (supercomplexes III(2)IV and III(2)IV(2)). Interacts with MRJ1.

The protein localises to the mitochondrion inner membrane. Its function is as follows. Component of the ubiquinol-cytochrome c oxidoreductase, a multisubunit transmembrane complex that is part of the mitochondrial electron transport chain which drives oxidative phosphorylation. The respiratory chain contains 3 multisubunit complexes succinate dehydrogenase (complex II, CII), ubiquinol-cytochrome c oxidoreductase (cytochrome b-c1 complex, complex III, CIII) and cytochrome c oxidase (complex IV, CIV), that cooperate to transfer electrons derived from NADH and succinate to molecular oxygen, creating an electrochemical gradient over the inner membrane that drives transmembrane transport and the ATP synthase. The cytochrome b-c1 complex catalyzes electron transfer from ubiquinol to cytochrome c, linking this redox reaction to translocation of protons across the mitochondrial inner membrane, with protons being carried across the membrane as hydrogens on the quinol. In the process called Q cycle, 2 protons are consumed from the matrix, 4 protons are released into the intermembrane space and 2 electrons are passed to cytochrome c. The sequence is that of Cytochrome b-c1 complex subunit 2, mitochondrial from Cryptococcus neoformans var. grubii serotype A (strain H99 / ATCC 208821 / CBS 10515 / FGSC 9487) (Filobasidiella neoformans var. grubii).